A 65-amino-acid chain; its full sequence is Large ribosomal subunit protein uL29 (65 aa).

Belongs to the universal ribosomal protein uL29 family.

This chain is Large ribosomal subunit protein uL29, found in Acinetobacter baylyi (strain ATCC 33305 / BD413 / ADP1).